Reading from the N-terminus, the 172-residue chain is MVKNIEFPKCVVFDLDYTLWPLWIDTHVTAPFKPSKNDPGVLIDKYGTEICFYSDITGILQELRNQKVTLCVASRTCAPKYAKQALNLMKVPIDGSLKPAIEFFTYVKAWPGSKMDHFKEIHNESGIDYREMVFFDDESRNREVERLGVTFLEKIKKNSLNILSFLKNHMHG.

Catalysis depends on Asp-14, which acts as the Nucleophile. Residues Asp-14, Asp-16, and Asp-137 each coordinate Mg(2+). Asp-16 acts as the Proton donor in catalysis.

It belongs to the HAD-like hydrolase superfamily.

The protein resides in the cytoplasm. The protein localises to the nucleus. This chain is HAD-like hydrolase superfamily protein P8B7.31, found in Schizosaccharomyces pombe (strain 972 / ATCC 24843) (Fission yeast).